A 78-amino-acid polypeptide reads, in one-letter code: MKTIVYLIVSILLLSSTVLVLAEGNAASHELQEYPIEEQRKCVDGSCDPYSSDAPPCCDNQICQCIFFVPCYCKYRGK.

Positions 1–22 are cleaved as a signal peptide; the sequence is MKTIVYLIVSILLLSSTVLVLA. Residues 23 to 40 constitute a propeptide that is removed on maturation; the sequence is EGNAASHELQEYPIEEQR. Intrachain disulfides connect Cys42–Cys58, Cys47–Cys63, Cys57–Cys73, and Cys65–Cys71. At Arg76 the chain carries Arginine amide.

In terms of tissue distribution, expressed by the venom gland.

The protein localises to the secreted. In terms of biological role, agonist of rat Nav1.3/SCN3A. This toxin increases the peak current amplitude, and potently inhibits the fast inactivation of the channel (EC(50)=120 nM). The inhibition of fast inactivation is voltage-independent (depolarizing voltages ranging from 220 mV to 130 mV). The toxin might bind to the domain IV of the Nav1.3 channel, while domain II might not participate in interacting with the toxin but could determine the efficacy of RTX-VII. In vivo, when intracerebroventricularly injected into mice, the toxin causes involuntary body twitching (seizure-like symptoms). The sequence is that of RTX-VII from Macrothele raveni (Funnel-web spider).